The chain runs to 409 residues: Argininosuccinate synthase (409 aa).

ATP is bound by residues 13–21 and alanine 40; that span reads AYSGGLDTS. Positions 91 and 96 each coordinate L-citrulline. Glycine 121 provides a ligand contact to ATP. 3 residues coordinate L-aspartate: threonine 123, asparagine 127, and aspartate 128. Asparagine 127 provides a ligand contact to L-citrulline. L-citrulline-binding residues include arginine 131, serine 183, serine 192, glutamate 268, and tyrosine 280.

Belongs to the argininosuccinate synthase family. Type 1 subfamily. In terms of assembly, homotetramer.

It is found in the cytoplasm. It catalyses the reaction L-citrulline + L-aspartate + ATP = 2-(N(omega)-L-arginino)succinate + AMP + diphosphate + H(+). The protein operates within amino-acid biosynthesis; L-arginine biosynthesis; L-arginine from L-ornithine and carbamoyl phosphate: step 2/3. This Saccharophagus degradans (strain 2-40 / ATCC 43961 / DSM 17024) protein is Argininosuccinate synthase.